Here is a 596-residue protein sequence, read N- to C-terminus: MKIRSPIVSVLGHVDHGKTTLLDYIRGSTIAAKEAGGITQHIGATEIPNDTIENICGDFISKLAIKDLIPGLFFIDTPGHAAFTSLRKRGGALADLAVLILDVNDGFKPQTYEALNILKMYKTPFIVVANKIDRLFGWEVHEGASFRETFSNQAKSVQQDLDNKIYEIVGELHKEGFQSERFDRVSNFASQISIIPISAKTGEGVIEVLAMLLGLAQEYLTEQLEIDENAPAKGTVLEIKEETGLGVTLDAIIYDGVLRTNDEIALMLSSEDVLVTKIRSILRPLPLEEMRDSKKKFRKLDEVVAAAGIKVAAPHLDDVVSGSPLRVLSEDTDVEQEILNEIDNITIDTEDEGILVKADTIGSLEAVVKLLREMDIPIRAADIGDVNRRDIINSSIAYDENELHGAIIAFNVDVHPNSEEDLNNSEVKLFSGDVIYQILEEYEEWVKQKQEDKKKSFYDAIIKPAKFVSLPKLVFRQSKPAIIGIESLSGTLKQGQQLINKDGHVVGSIASMEDKGETLPDISRGQRVAMAIKDAIVGKDFEEGDELYVDIPEKHYKYIEREFKDKLTEDEFETLYEFLEIKRKQDSDWGSFGLFE.

The 218-residue stretch at 3 to 220 (IRSPIVSVLG…MLLGLAQEYL (218 aa)) folds into the tr-type G domain. The G1 stretch occupies residues 12–19 (GHVDHGKT). 12–19 (GHVDHGKT) provides a ligand contact to GTP. Positions 37–41 (GITQH) are G2. Residues 76–79 (DTPG) are G3. GTP is bound by residues 76–80 (DTPGH) and 130–133 (NKID). Residues 130–133 (NKID) form a G4 region. A G5 region spans residues 198–200 (SAK).

This sequence belongs to the TRAFAC class translation factor GTPase superfamily. Classic translation factor GTPase family. IF-2 subfamily.

Function in general translation initiation by promoting the binding of the formylmethionine-tRNA to ribosomes. Seems to function along with eIF-2. This is Probable translation initiation factor IF-2 from Methanobrevibacter smithii (strain ATCC 35061 / DSM 861 / OCM 144 / PS).